Reading from the N-terminus, the 513-residue chain is Voltage-gated potassium channel regulatory subunit KCNG1 (513 aa).

The Cytoplasmic portion of the chain corresponds to 1–224 (MTLLPGDNSD…DMVERPHSGL (224 aa)). A disordered region spans residues 184–204 (EEDDALDSEGRDSEGPAEGEG). The span at 191–204 (SEGRDSEGPAEGEG) shows a compositional bias: basic and acidic residues. A helical membrane pass occupies residues 225–246 (PGKVFACLSVLFVTVTAVNLSV). The Extracellular segment spans residues 247-267 (STLPSLREEEEQGHCSQMCHN). A helical transmembrane segment spans residues 268-289 (VFIVESVCVGWFSLEFLLRLIQ). Topologically, residues 290-300 (APSKFAFLRSP) are cytoplasmic. Residues 301–321 (LTLIDLVAILPYYITLLVDGA) traverse the membrane as a helical segment. The Extracellular segment spans residues 322–338 (AAGRRKPGAGNSYLDKV). Residues 339 to 359 (GLVLRVLRALRILYVMRLARH) traverse the membrane as a helical; Voltage-sensor segment. At 360–374 (SLGLQTLGLTARRCT) the chain is on the cytoplasmic side. The chain crosses the membrane as a helical span at residues 375–396 (REFGLLLLFLCVAIALFAPLLY). Residues 397–411 (VIENEMADSPEFTSI) lie on the Extracellular side of the membrane. Positions 412–423 (PACYWWAVITMT) form an intramembrane region, helical. The Selectivity filter signature appears at 424–429 (TVGYGD). The stretch at 424-431 (TVGYGDMV) is an intramembrane region. Topologically, residues 432-438 (PRSTPGQ) are extracellular. The helical transmembrane segment at 439–467 (VVALSSILSGILLMAFPVTSIFHTFSRSY) threads the bilayer. At 468 to 513 (LELKQEQERVMFRRAQFLIKTKSQLSVSQDSDILFGSASSDTRDNN) the chain is on the cytoplasmic side.

This sequence belongs to the potassium channel family. G (TC 1.A.1.2) subfamily. Kv6.1/KCNG1 sub-subfamily. As to quaternary structure, heterotetramer with KCNB1. Heterotetramer with KCNB2. Expressed in brain and placenta, and at much lower levels in kidney and pancreas.

It is found in the cell membrane. In terms of biological role, regulatory alpha-subunit of the voltage-gated potassium (Kv) channel which, when coassembled with KCNB1 or KCNB2, can modulate their expression and their gating kinetics by acting on deactivation upon repolarization and inactivation during maintained depolarization. Potassium channel subunit that does not form functional channels by itself. This chain is Voltage-gated potassium channel regulatory subunit KCNG1, found in Homo sapiens (Human).